The following is a 379-amino-acid chain: Cytochrome b (379 aa).

A run of 4 helical transmembrane segments spans residues 33–53 (FGSL…FLAM), 77–98 (WLIR…FIHV), 113–133 (WNIG…GYVL), and 178–198 (FFAF…VHLL). Heme b is bound by residues His83 and His97. Heme b contacts are provided by His182 and His196. His201 contacts a ubiquinone. The next 4 helical transmembrane spans lie at 226–246 (IKDL…ALFF), 288–308 (LGGV…PLLN), 320–340 (VTQT…WIGG), and 347–367 (FTMI…ILIP).

It belongs to the cytochrome b family. In terms of assembly, the cytochrome bc1 complex contains 11 subunits: 3 respiratory subunits (MT-CYB, CYC1 and UQCRFS1), 2 core proteins (UQCRC1 and UQCRC2) and 6 low-molecular weight proteins (UQCRH/QCR6, UQCRB/QCR7, UQCRQ/QCR8, UQCR10/QCR9, UQCR11/QCR10 and a cleavage product of UQCRFS1). This cytochrome bc1 complex then forms a dimer. The cofactor is heme b.

The protein localises to the mitochondrion inner membrane. Its function is as follows. Component of the ubiquinol-cytochrome c reductase complex (complex III or cytochrome b-c1 complex) that is part of the mitochondrial respiratory chain. The b-c1 complex mediates electron transfer from ubiquinol to cytochrome c. Contributes to the generation of a proton gradient across the mitochondrial membrane that is then used for ATP synthesis. This chain is Cytochrome b (MT-CYB), found in Akodon philipmyersi (Myers' grass mouse).